The following is a 179-amino-acid chain: MEVKTIMLLFQILAISTLKQGSAHVPDGYVEENVALRGRATQSAQLRGEHAALAHASNAIDGNRDSNYHHGSCTHTEGANPWWRVDLLQVYTIASVTITNRGDCCGERISGARILIGNSLENNGINNPQCSVIGSLATGETRTFHCPQPMIGRYVTVYLPKIESLQLCEVEVNALLPVN.

The signal sequence occupies residues M1–A23. The tract at residues E31–N179 is F5/8 type C-like. Residues N58, D61, N63, and S72 each coordinate Ca(2+). Cystine bridges form between C73–C168, C104–C105, and C130–C146. Alpha-L-fucose is bound by residues H75 and R101. Residues R101–D103 carry the Cell attachment site motif. R108 provides a ligand contact to alpha-L-fucose. Ca(2+)-binding residues include C168 and E169.

Belongs to the fucolectin family. In terms of assembly, homotrimer. Gill mucous cells.

The protein localises to the secreted. Its function is as follows. Acts as a defensive agent. Recognizes blood group fucosylated oligosaccharides including A, B, H and Lewis B-type antigens. Does not recognize Lewis A antigen and has low affinity for monovalent haptens. The sequence is that of Fucolectin-4 from Anguilla japonica (Japanese eel).